The chain runs to 130 residues: Small ribosomal subunit protein uS11 (130 aa).

Over residues 1-15 (MARPTKKSGPRKQKR) the composition is skewed to basic residues. Positions 1-21 (MARPTKKSGPRKQKRNVPSGV) are disordered.

Belongs to the universal ribosomal protein uS11 family. Part of the 30S ribosomal subunit. Interacts with proteins S7 and S18. Binds to IF-3.

Its function is as follows. Located on the platform of the 30S subunit, it bridges several disparate RNA helices of the 16S rRNA. Forms part of the Shine-Dalgarno cleft in the 70S ribosome. In Synechococcus elongatus (strain ATCC 33912 / PCC 7942 / FACHB-805) (Anacystis nidulans R2), this protein is Small ribosomal subunit protein uS11.